Reading from the N-terminus, the 371-residue chain is DNA primase large subunit PriL (371 aa).

Positions 230, 301, 310, and 317 each coordinate [4Fe-4S] cluster. The segment at 337–371 is disordered; that stretch reads EREKEEGKEKGNEEKKEKREEHEKKNEKGNEIKEK.

It belongs to the eukaryotic-type primase large subunit family. In terms of assembly, heterodimer of a small subunit (PriS) and a large subunit (PriL). Requires [4Fe-4S] cluster as cofactor.

Its function is as follows. Regulatory subunit of DNA primase, an RNA polymerase that catalyzes the synthesis of short RNA molecules used as primers for DNA polymerase during DNA replication. Stabilizes and modulates the activity of the small subunit, increasing the rate of DNA synthesis, and conferring RNA synthesis capability. The DNA polymerase activity may enable DNA primase to also catalyze primer extension after primer synthesis. May also play a role in DNA repair. In Methanosarcina acetivorans (strain ATCC 35395 / DSM 2834 / JCM 12185 / C2A), this protein is DNA primase large subunit PriL.